We begin with the raw amino-acid sequence, 140 residues long: Large ribosomal subunit protein uL11 (140 aa).

It belongs to the universal ribosomal protein uL11 family. Part of the ribosomal stalk of the 50S ribosomal subunit. Interacts with L10 and the large rRNA to form the base of the stalk. L10 forms an elongated spine to which L12 dimers bind in a sequential fashion forming a multimeric L10(L12)X complex. Post-translationally, one or more lysine residues are methylated.

In terms of biological role, forms part of the ribosomal stalk which helps the ribosome interact with GTP-bound translation factors. The polypeptide is Large ribosomal subunit protein uL11 (Staphylococcus aureus (strain bovine RF122 / ET3-1)).